Consider the following 65-residue polypeptide: Beta-defensin 106A (65 aa).

Positions 1 to 20 (MRTFLFLFAVLFFLTPAKNE) are cleaved as a signal peptide. Cystine bridges form between Cys-26-Cys-53, Cys-33-Cys-47, and Cys-37-Cys-54.

It belongs to the beta-defensin family. In terms of assembly, monomer. Interacts with CCR2 (via extracellular N-terminal region); this interaction may preferentially require specific tyrosine sulfation on CCR2.

The protein localises to the secreted. It is found in the membrane. Has antibacterial activity. Acts as a ligand for C-C chemokine receptor CCR2. In Pongo pygmaeus (Bornean orangutan), this protein is Beta-defensin 106A (DEFB106A).